The sequence spans 246 residues: Outer membrane protein assembly factor BamD (246 aa).

Positions 1 to 22 (MKKKNSIIFVFMILFFNSTVQS) are cleaved as a signal peptide.

The protein belongs to the BamD family. In terms of assembly, part of the Bam complex.

It is found in the cell outer membrane. Functionally, part of the outer membrane protein assembly complex, which is involved in assembly and insertion of beta-barrel proteins into the outer membrane. The sequence is that of Outer membrane protein assembly factor BamD from Buchnera aphidicola subsp. Acyrthosiphon pisum (strain APS) (Acyrthosiphon pisum symbiotic bacterium).